A 286-amino-acid chain; its full sequence is Putative L-ribulose-5-phosphate 3-epimerase SgbU (286 aa).

It belongs to the L-ribulose-5-phosphate 3-epimerase family.

The enzyme catalyses L-ribulose 5-phosphate = L-xylulose 5-phosphate. Its function is as follows. Catalyzes the isomerization of L-xylulose-5-phosphate to L-ribulose-5-phosphate. The protein is Putative L-ribulose-5-phosphate 3-epimerase SgbU (sgbU) of Haemophilus influenzae (strain ATCC 51907 / DSM 11121 / KW20 / Rd).